The sequence spans 438 residues: Phosphoribosylamine--glycine ligase (438 aa).

One can recognise an ATP-grasp domain in the interval Arg108–Lys316. Residue Ile135–Thr194 coordinates ATP. Residues Gln274, Glu286, and Asn288 each coordinate Mg(2+). Residues Gln274, Glu286, and Asn288 each contribute to the Mn(2+) site.

This sequence belongs to the GARS family. Mg(2+) serves as cofactor. Mn(2+) is required as a cofactor.

The enzyme catalyses 5-phospho-beta-D-ribosylamine + glycine + ATP = N(1)-(5-phospho-beta-D-ribosyl)glycinamide + ADP + phosphate + H(+). Its pathway is purine metabolism; IMP biosynthesis via de novo pathway; N(1)-(5-phospho-D-ribosyl)glycinamide from 5-phospho-alpha-D-ribose 1-diphosphate: step 2/2. This chain is Phosphoribosylamine--glycine ligase, found in Pyrococcus abyssi (strain GE5 / Orsay).